The following is a 286-amino-acid chain: Pantothenate synthetase (286 aa).

Residue 30-37 (MGNLHSGH) coordinates ATP. Histidine 37 (proton donor) is an active-site residue. Position 61 (glutamine 61) interacts with (R)-pantoate. Glutamine 61 lines the beta-alanine pocket. Position 149 to 152 (149 to 152 (GQKD)) interacts with ATP. Glutamine 155 provides a ligand contact to (R)-pantoate. Residues valine 178 and 186–189 (LSSR) each bind ATP.

It belongs to the pantothenate synthetase family. In terms of assembly, homodimer.

It is found in the cytoplasm. The catalysed reaction is (R)-pantoate + beta-alanine + ATP = (R)-pantothenate + AMP + diphosphate + H(+). Its pathway is cofactor biosynthesis; (R)-pantothenate biosynthesis; (R)-pantothenate from (R)-pantoate and beta-alanine: step 1/1. Functionally, catalyzes the condensation of pantoate with beta-alanine in an ATP-dependent reaction via a pantoyl-adenylate intermediate. This Pseudomonas fluorescens (strain ATCC BAA-477 / NRRL B-23932 / Pf-5) protein is Pantothenate synthetase.